A 228-amino-acid chain; its full sequence is Protein 33K (228 aa).

Residues 1 to 156 (MAPKKKLQLP…GALRLAPNEP (156 aa)) are disordered. Acidic residues predominate over residues 15–53 (TDEEEYWDSQAEEVLDEEEEMMEDWDSLDEASEAEEVSD). 2 stretches are compositionally biased toward low complexity: residues 54-63 (ETPSPSVAFP) and 104-119 (AAPTAPAAAAAAATAA). The interval 171–198 (YAIFQQSRGQEQELKIKNRSLRSLTRSC) is necessary for nuclear subcellular location. The tract at residues 177 to 197 (SRGQEQELKIKNRSLRSLTRS) is RS-repeat; required for splicing enhancer activity.

It belongs to the adenoviridae splicing factor family. In terms of assembly, homooligomer. Interacts with DBP; this interaction occurs at a unique vertex during genome packaging. Interacts with IVa2; this interaction occurs at a unique vertex during genome packaging and seems to potentiate IVa2 and 33K oligomerization. Post-translationally, phosphorylated in vitro by human PKA and PRKDC. PRKDC inhibits, whereas PKA activates the splicing factor.

It localises to the host nucleus. Promotes alternative splicing of late transcripts by promoting splicing at weak 3' splice sites. Required for the temporal activation of major late pre-mRNA splicing at late times of infection. Induces the splicing and expression of the late capsid vertex protein. Its function is as follows. Probably functions as the small terminase that is part of the molecular motor that translocates genomic DNA in empty capsid during DNA packaging. This motor is located at a unique vertex and comprises at least the IVa2 ATPase, the small terminase 33K and probably a portal. Forms a ring-like structure of about 17 nm in which genomic DNA is translocated into the capsid. Stimulates IVa2 ATPase activity in the presence of the viral genome. Once the DNA is packaged, the terminase detaches: the 33K protein is present in the empty particles, but not in the mature virions. Also involved in virion assembly. In Homo sapiens (Human), this protein is Protein 33K.